Here is a 456-residue protein sequence, read N- to C-terminus: Adenylosuccinate synthetase isozyme 2 (456 aa).

The interval 1-24 (MAFAETYPAASSLPNGDCGRPRAR) is disordered. GTP is bound by residues 39-45 (GDEGKGK) and 67-69 (GHT). Residue Asp40 is the Proton acceptor of the active site. Positions 40 and 67 each coordinate Mg(2+). Residue Asp40 coordinates substrate. Residues 40–43 (DEGK), 65–68 (NAGH), Thr162, Arg176, Asn255, Thr270, and Arg334 contribute to the IMP site. His68 functions as the Proton donor in the catalytic mechanism. Residue 330-336 (VTTGRKR) participates in substrate binding. GTP-binding positions include Arg336, 362–364 (KLD), and 444–447 (GVGK).

Belongs to the adenylosuccinate synthetase family. Homodimer. It depends on Mg(2+) as a cofactor.

It is found in the cytoplasm. Its subcellular location is the mitochondrion. The catalysed reaction is IMP + L-aspartate + GTP = N(6)-(1,2-dicarboxyethyl)-AMP + GDP + phosphate + 2 H(+). The protein operates within purine metabolism; AMP biosynthesis via de novo pathway; AMP from IMP: step 1/2. With respect to regulation, inhibited competitively by AMP and IMP and non-competitively by fructose 1,6-bisphosphate. Its function is as follows. Plays an important role in the de novo pathway and in the salvage pathway of purine nucleotide biosynthesis. Catalyzes the first committed step in the biosynthesis of AMP from IMP. This chain is Adenylosuccinate synthetase isozyme 2, found in Homo sapiens (Human).